Consider the following 511-residue polypeptide: Spermatogenesis-associated protein 2 (511 aa).

Residues 77 to 149 form the PUB domain; the sequence is ALHCAFSMLE…AYKLKELVES (73 aa). Residues 320–337 carry the PIM motif motif; sequence TYFPTQDDVDLYTDSEPR.

Belongs to the SPATA2 family. Interacts (via the PIM motif) with RNF31/HOIP (via the PUB domain); the interaction is direct. Interacts (via the PUB domain) with CYLD; the interaction is direct. In terms of tissue distribution, expressed in the testis and to a lesser extent in the brain, while skeletal muscle and kidney show weak expression.

The protein resides in the cytoplasm. The protein localises to the nucleus. In terms of biological role, bridging factor that mediates the recruitment of CYLD to the LUBAC complex, thereby regulating TNF-alpha-induced necroptosis. Acts as a direct binding intermediate that bridges RNF31/HOIP, the catalytic subunit of the LUBAC complex, and the deubiquitinase (CYLD), thereby recruiting CYLD to the TNF-R1 signaling complex (TNF-RSC). Required to activate the 'Met-1'- (linear) and 'Lys-63'-linked deubiquitinase activities of CYLD. Controls the kinase activity of RIPK1 and TNF-alpha-induced necroptosis by promoting 'Met-1'-linked deubiquitination of RIPK1 by CYLD. This chain is Spermatogenesis-associated protein 2, found in Rattus norvegicus (Rat).